Consider the following 274-residue polypeptide: Centromere protein K (274 aa).

Positions 1–21 are disordered; the sequence is MSGYQHELPPNISKTSPAPEE. A coiled-coil region spans residues 96–159; the sequence is KEELEKIAQE…NQLTAFSEKR (64 aa).

This sequence belongs to the CENP-K/MCM22 family.

Its subcellular location is the nucleus. It localises to the chromosome. The protein resides in the centromere. The protein localises to the kinetochore. Probable component of a centromeric complex involved in assembly of kinetochore proteins, mitotic progression and chromosome segregation. This Xenopus laevis (African clawed frog) protein is Centromere protein K (cenpk).